Reading from the N-terminus, the 150-residue chain is D-aminoacyl-tRNA deacylase (150 aa).

Positions 138–139 (GP) match the Gly-cisPro motif, important for rejection of L-amino acids motif.

The protein belongs to the DTD family. In terms of assembly, homodimer.

It localises to the cytoplasm. It catalyses the reaction glycyl-tRNA(Ala) + H2O = tRNA(Ala) + glycine + H(+). It carries out the reaction a D-aminoacyl-tRNA + H2O = a tRNA + a D-alpha-amino acid + H(+). Its function is as follows. An aminoacyl-tRNA editing enzyme that deacylates mischarged D-aminoacyl-tRNAs. Also deacylates mischarged glycyl-tRNA(Ala), protecting cells against glycine mischarging by AlaRS. Acts via tRNA-based rather than protein-based catalysis; rejects L-amino acids rather than detecting D-amino acids in the active site. By recycling D-aminoacyl-tRNA to D-amino acids and free tRNA molecules, this enzyme counteracts the toxicity associated with the formation of D-aminoacyl-tRNA entities in vivo and helps enforce protein L-homochirality. In Natranaerobius thermophilus (strain ATCC BAA-1301 / DSM 18059 / JW/NM-WN-LF), this protein is D-aminoacyl-tRNA deacylase.